The primary structure comprises 80 residues: D-alanyl carrier protein (80 aa).

The Carrier domain occupies 1 to 77 (MDIQKQIVDI…KLVEQVKKLQ (77 aa)). At serine 35 the chain carries O-(pantetheine 4'-phosphoryl)serine.

This sequence belongs to the DltC family. In terms of processing, 4'-phosphopantetheine is transferred from CoA to a specific serine of apo-DCP.

It is found in the cytoplasm. It participates in cell wall biogenesis; lipoteichoic acid biosynthesis. In terms of biological role, carrier protein involved in the D-alanylation of lipoteichoic acid (LTA). The loading of thioester-linked D-alanine onto DltC is catalyzed by D-alanine--D-alanyl carrier protein ligase DltA. The DltC-carried D-alanyl group is further transferred to cell membrane phosphatidylglycerol (PG) by forming an ester bond, probably catalyzed by DltD. D-alanylation of LTA plays an important role in modulating the properties of the cell wall in Gram-positive bacteria, influencing the net charge of the cell wall. The protein is D-alanyl carrier protein of Lactobacillus delbrueckii subsp. bulgaricus (strain ATCC 11842 / DSM 20081 / BCRC 10696 / JCM 1002 / NBRC 13953 / NCIMB 11778 / NCTC 12712 / WDCM 00102 / Lb 14).